A 911-amino-acid chain; its full sequence is Desmoglein-1-gamma (911 aa).

Residues 1-23 form the signal peptide; that stretch reads MDWHSFRIAALLLTSLVVLEVNS. The propeptide occupies 24 to 49; it reads EFQIQVRDHNAKNGTIKWHSIRRQKR. Cadherin domains lie at 50 to 157, 158 to 269, and 270 to 389; these read EWIK…PPVF, SMTT…IPYL, and EQSS…QPGS. The Extracellular portion of the chain corresponds to 50 to 519; sequence EWIKFAAACR…PNVDNVHFGP (470 aa). Asn110 is a glycosylation site (N-linked (GlcNAc...) (high mannose) asparagine). N-linked (GlcNAc...) asparagine glycosylation is present at Asn180. N-linked (GlcNAc...) asparagine glycosylation occurs at Asn401. Residues 520-540 form a helical membrane-spanning segment; it reads AGIGLLIMGFLVLGLVPFLLI. The Cytoplasmic portion of the chain corresponds to 541–911; sequence SCDCGGAPGG…GMIGNLSIPP (371 aa). Desmoglein repeat repeat units follow at residues 783 to 809, 810 to 839, 840 to 869, and 870 to 897; these read AYPS…TVRE, SYTT…ERVV, GPIS…ERVI, and APGS…ERVI. A Desmoglein repeat 5; truncated repeat occupies 898-911; that stretch reads QPTSGMIGNLSIPP.

In terms of assembly, interacts with DSC3; there is evidence to suggest that the interaction promotes cell-cell adhesion of keratinocytes. As to expression, expressed in epidermis, brain, liver, skeletal, muscle and testis.

The protein localises to the cell membrane. It localises to the cell junction. It is found in the desmosome. The protein resides in the cytoplasm. Its subcellular location is the nucleus. Component of intercellular desmosome junctions. Involved in the interaction of plaque proteins and intermediate filaments mediating cell-cell adhesion. The polypeptide is Desmoglein-1-gamma (Dsg1c) (Mus musculus (Mouse)).